The following is a 344-amino-acid chain: Endo-1,4-beta-xylanase UM03411 (344 aa).

A signal peptide spans 1–21 (MKTNFLVLLSALLAASSAVTA). The GH10 domain maps to 35-338 (QRAGSSLNAA…KPAYNAVLST (304 aa)). E166 functions as the Proton donor in the catalytic mechanism. Residue N171 is glycosylated (N-linked (GlcNAc...) asparagine). The active-site Nucleophile is the E275. Cysteines 293 and 299 form a disulfide. N310 and N323 each carry an N-linked (GlcNAc...) asparagine glycan.

It belongs to the glycosyl hydrolase 10 (cellulase F) family.

It localises to the secreted. It catalyses the reaction Endohydrolysis of (1-&gt;4)-beta-D-xylosidic linkages in xylans.. The protein operates within glycan degradation; xylan degradation. Functionally, endo-1,4-beta-xylanase involved in the hydrolysis of xylan, a major structural heterogeneous polysaccharide found in plant biomass representing the second most abundant polysaccharide in the biosphere, after cellulose. The chain is Endo-1,4-beta-xylanase UM03411 from Mycosarcoma maydis (Corn smut fungus).